The following is a 593-amino-acid chain: Vicilin Jug r 2.0101 (593 aa).

2 stretches are compositionally biased toward basic and acidic residues: residues 46–76 (LEED…EQRY) and 97–118 (RRCE…DRQD). The tract at residues 46-123 (LEEDQRSQEE…RDRQDPQQQY (78 aa)) is disordered. IgE-binding stretches follow at residues 49–58 (DQRSQEERER), 76–85 (YEQCQQQCER), and 101–110 (QRRQQEERER). An igE-binding. Involved in cross-reactivity with peanut allergen Ara h 2; able to inhibit binding of IgE from a peanut-allergic patient to Ara h 2 region spans residues 140-149 (QRQCQQRCER). Over residues 150–178 (QYKEQQGRERGPEASPRRESRGREEEQQR) the composition is skewed to basic and acidic residues. Residues 150-184 (QYKEQQGRERGPEASPRRESRGREEEQQRHNPYYF) are disordered. T-cell epitope; recognized by the HLA-DRB1-restricted CD4(+) T-cells regions lie at residues 175–193 (EQQR…RSRH) and 206–225 (FTER…VILD). Y182 contributes to the Cu cation binding site. 2 consecutive Cupin type-1 domains span residues 187–341 (QSIR…DRLE) and 386–556 (ISLK…EEIE). N229 carries an N-linked (GlcNAc...) asparagine glycan. T-cell epitope; recognized by the HLA-DRB1-restricted CD4(+) T-cells regions lie at residues 246–265 (TRGR…SFNL), 302–321 (PGQF…QSYL), 318–337 (QSYL…NTPR), 382–401 (SGGP…QFGQ), 414–433 (QEMD…MMVP), and 438–457 (KATV…MACP). Residues C456 and H458 each contribute to the Cu cation site. The tract at residues 463 to 470 (SYEGQGRR) is igE-binding. The interval 478-497 (TGRFQKVTARLARGDIFVIP) is T-cell epitope; recognized by the HLA-DRB1-restricted CD4(+) T-cells. Position 500 (H500) interacts with Cu cation. Residues 529-556 (LAGQNNIINQLEREAKELSFNMPREEIE) adopt a coiled-coil conformation. Positions 541–555 (REAKELSFNMPREEI) are igE-binding. 2 T-cell epitope; recognized by the HLA-DRB1-restricted CD4(+) T-cells regions span residues 542 to 561 (EAKE…IFES) and 558 to 577 (IFES…SRRG).

The protein belongs to the 7S seed storage protein family. Proteolytically cleaved. In terms of tissue distribution, expressed in seed (at protein level).

Functionally, seed storage protein. The polypeptide is Vicilin Jug r 2.0101 (Juglans regia (English walnut)).